A 315-amino-acid polypeptide reads, in one-letter code: Zinc transport protein ZntB (315 aa).

Over 1–250 the chain is Cytoplasmic; it reads MGFMIEHWDF…RDEKTNKNSY (250 aa). A helical transmembrane segment spans residues 251 to 271; that stretch reads LFTLVATIFLPTSFLTGLLGI. Residues 272-282 lie on the Periplasmic side of the membrane; sequence NIGGMPGVESS. A helical transmembrane segment spans residues 283 to 303; it reads MAFTWFCIALIVIFGLEWLLF. Residues 304–315 are Cytoplasmic-facing; the sequence is KRLGFTNKTDDE.

The protein belongs to the CorA metal ion transporter (MIT) (TC 1.A.35) family. As to quaternary structure, homopentamer. Can assemble pentamers in the absence of the transmembrane regions.

The protein localises to the cell inner membrane. It carries out the reaction Zn(2+)(out) + H(+)(out) = Zn(2+)(in) + H(+)(in). Zinc transporter. Acts as a Zn(2+):proton symporter, which likely mediates zinc ion uptake. This is Zinc transport protein ZntB from Vibrio parahaemolyticus serotype O3:K6 (strain RIMD 2210633).